We begin with the raw amino-acid sequence, 249 residues long: MILELDCGNSFIKWRVIHVADAVIEGGGIVDSDQALVAEVAALASVRLTGCRIVSVRSEEETDALCALIAQAFAVQAKVAHPVREMAGVRNGYDDYQRLGMDRWLAALGAFHLAKGACLVIDLGTAAKADFVSADGEHLGGYICPGMPLMRSQLRTHTRRIRYDDASAERALSSLSPGRSTVEAVERGCVLMLQGFAYTQLEQARVLWGEEFTVFLTGGDAPLVRAALPQARVVPDLVFVGLAMACPLD.

6–13 provides a ligand contact to ATP; that stretch reads DCGNSFIK. Substrate is bound by residues Tyr-93 and 100-103; that span reads GMDR. Asp-102 acts as the Proton acceptor in catalysis. Asp-122 is a K(+) binding site. Thr-125 is an ATP binding site. Thr-181 lines the substrate pocket.

Belongs to the type III pantothenate kinase family. As to quaternary structure, homodimer. Requires NH4(+) as cofactor. The cofactor is K(+).

It localises to the cytoplasm. It carries out the reaction (R)-pantothenate + ATP = (R)-4'-phosphopantothenate + ADP + H(+). It participates in cofactor biosynthesis; coenzyme A biosynthesis; CoA from (R)-pantothenate: step 1/5. In terms of biological role, catalyzes the phosphorylation of pantothenate (Pan), the first step in CoA biosynthesis. This chain is Type III pantothenate kinase, found in Pseudomonas putida (strain ATCC 47054 / DSM 6125 / CFBP 8728 / NCIMB 11950 / KT2440).